Here is a 374-residue protein sequence, read N- to C-terminus: S-adenosylmethionine synthase 2 (374 aa).

Residue E11 participates in Mg(2+) binding. H17 is a binding site for ATP. Residue E45 coordinates K(+). The L-methionine site is built by E58 and Q101. ATP is bound by residues 169-171 (DGK), 237-240 (SGRF), D248, 254-255 (RK), A271, K275, and K279. D248 is an L-methionine binding site. Residue K279 coordinates L-methionine.

It belongs to the AdoMet synthase family. In terms of assembly, homotetramer. The cofactor is Mn(2+). Requires Mg(2+) as cofactor. It depends on Co(2+) as a cofactor. K(+) serves as cofactor. In terms of tissue distribution, expressed in vegetative and reproductive tissues.

It localises to the cytoplasm. It catalyses the reaction L-methionine + ATP + H2O = S-adenosyl-L-methionine + phosphate + diphosphate. It participates in amino-acid biosynthesis; S-adenosyl-L-methionine biosynthesis; S-adenosyl-L-methionine from L-methionine: step 1/1. Functionally, catalyzes the formation of S-adenosylmethionine from methionine and ATP. The reaction comprises two steps that are both catalyzed by the same enzyme: formation of S-adenosylmethionine (AdoMet) and triphosphate, and subsequent hydrolysis of the triphosphate. The sequence is that of S-adenosylmethionine synthase 2 (SAMS2) from Pisum sativum (Garden pea).